A 633-amino-acid polypeptide reads, in one-letter code: MGANSKSVTASFTVIAVFFLICGGRTAVEDETEFHGDYSKLSGIIIPGFASTQLRAWSILDCPYTPLDFNPLDLVWLDTTKLLSAVNCWFKCMVLDPYNQTDHPECKSRPDSGLSAITELDPGYITGPLSTVWKEWLKWCVEFGIEANAIVAVPYDWRLSPTKLEERDLYFHKLKLTFETALKLRGGPSIVFAHSMGNNVFRYFLEWLRLEIAPKHYLKWLDQHIHAYFAVGAPLLGSVEAIKSTLSGVTFGLPVSEGTARLLSNSFASSLWLMPFSKNCKGDNTFWTHFSGGAAKKDKRVYHCDEEEYQSKYSGWPTNIINIEIPSTSVTETALVNMTSMECGLPTLLSFTARELADGTLFKAIEDYDPDSKRMLHQLKKLYHDDPVFNPLTPWERPPIKNVFCIYGAHLKTEVGYYFAPSGKPYPDNWIITDIIYETEGSLVSRSGTVVDGNAGPITGDETVPYHSLSWCKNWLGPKVNITMAPQPEHDGSDVHVELNVDHEHGSDIIANMTKAPRVKYITFYEDSESIPGKRTAVWELDKTNHRNIVRSPVLMRELWLQMWHDIQPGAKSKFVTKAKRGPLRDADCYWDYGKACCAWQEYCEYRYSFGDVHLGQSCRLRNTSANMLLQYI.

The Cytoplasmic portion of the chain corresponds to 1–6 (MGANSK). The chain crosses the membrane as a helical; Signal-anchor for type II membrane protein span at residues 7–29 (SVTASFTVIAVFFLICGGRTAVE). Topologically, residues 30–633 (DETEFHGDYS…TSANMLLQYI (604 aa)) are lumenal. Ser195 (acyl-ester intermediate) is an active-site residue. Residues Asp461 and His505 each act as charge relay system in the active site.

This sequence belongs to the AB hydrolase superfamily. Lipase family.

The protein localises to the microsome membrane. In terms of biological role, involved in lipid catabolism. Essential for sterol esters biosynthesis in leaves and seeds, but not in flowers. Plays a role in controlling the free sterol content of leaves. Catalyzes the transacylation of acyl groups from phospholipids to a variety of different sterols. Prefers phosphatidylethanolamine over phosphatidylcholine as an acyl donor. Not active toward neutral lipids. Highly specific for position sn-2, which in plant lipids is essentially devoid of saturated acyl groups. Broad sterol specificity (cholesterol &gt; campesterol &gt; sitosterol &gt; stigmasterol), but no activity with lupeol or beta-amyrin. This is Phospholipid--sterol O-acyltransferase (PSAT) from Arabidopsis thaliana (Mouse-ear cress).